The sequence spans 373 residues: Cobalt-precorrin-5B C(1)-methyltransferase (373 aa).

Belongs to the CbiD family.

It catalyses the reaction Co-precorrin-5B + S-adenosyl-L-methionine = Co-precorrin-6A + S-adenosyl-L-homocysteine. It participates in cofactor biosynthesis; adenosylcobalamin biosynthesis; cob(II)yrinate a,c-diamide from sirohydrochlorin (anaerobic route): step 6/10. Functionally, catalyzes the methylation of C-1 in cobalt-precorrin-5B to form cobalt-precorrin-6A. This Listeria welshimeri serovar 6b (strain ATCC 35897 / DSM 20650 / CCUG 15529 / CIP 8149 / NCTC 11857 / SLCC 5334 / V8) protein is Cobalt-precorrin-5B C(1)-methyltransferase.